The sequence spans 329 residues: Ribosomal protein L11 methyltransferase (329 aa).

S-adenosyl-L-methionine contacts are provided by Thr177, Gly198, Asp220, and Asn264.

The protein belongs to the methyltransferase superfamily. PrmA family.

It localises to the cytoplasm. The enzyme catalyses L-lysyl-[protein] + 3 S-adenosyl-L-methionine = N(6),N(6),N(6)-trimethyl-L-lysyl-[protein] + 3 S-adenosyl-L-homocysteine + 3 H(+). Functionally, methylates ribosomal protein L11. The protein is Ribosomal protein L11 methyltransferase of Helicobacter pylori (strain J99 / ATCC 700824) (Campylobacter pylori J99).